The chain runs to 290 residues: Diaminopimelate epimerase (290 aa).

Substrate-binding residues include asparagine 17, glutamine 49, and asparagine 69. Cysteine 78 acts as the Proton donor in catalysis. Substrate is bound by residues 79 to 80, asparagine 166, asparagine 199, and 217 to 218; these read GN and ER. The active-site Proton acceptor is cysteine 226. 227 to 228 serves as a coordination point for substrate; that stretch reads GS.

The protein belongs to the diaminopimelate epimerase family. In terms of assembly, homodimer.

The protein localises to the cytoplasm. It carries out the reaction (2S,6S)-2,6-diaminopimelate = meso-2,6-diaminopimelate. The protein operates within amino-acid biosynthesis; L-lysine biosynthesis via DAP pathway; DL-2,6-diaminopimelate from LL-2,6-diaminopimelate: step 1/1. Catalyzes the stereoinversion of LL-2,6-diaminopimelate (L,L-DAP) to meso-diaminopimelate (meso-DAP), a precursor of L-lysine and an essential component of the bacterial peptidoglycan. The polypeptide is Diaminopimelate epimerase (Nitrobacter hamburgensis (strain DSM 10229 / NCIMB 13809 / X14)).